We begin with the raw amino-acid sequence, 670 residues long: ATP synthase subunit alpha 2 (670 aa).

180 to 187 contributes to the ATP binding site; the sequence is GDRATGKT. A disordered region spans residues 527–670; sequence AEDAAGDIGG…DAEAEARHKR (144 aa). A compositionally biased stretch (basic and acidic residues) spans 543 to 588; it reads ARGDADRDADHGANREVSREVSPEASREVSREVSREVSHEADRDAA. Positions 589-599 are enriched in low complexity; the sequence is ADAARVAGRAP. Basic and acidic residues predominate over residues 621–639; sequence ADGDRASASRPRPDARGDA. The segment covering 640 to 661 has biased composition (low complexity); sequence ARTAPSPQGGAEVNVNAAANVD.

It belongs to the ATPase alpha/beta chains family. As to quaternary structure, F-type ATPases have 2 components, CF(1) - the catalytic core - and CF(0) - the membrane proton channel. CF(1) has five subunits: alpha(3), beta(3), gamma(1), delta(1), epsilon(1). CF(0) has three main subunits: a(1), b(2) and c(9-12). The alpha and beta chains form an alternating ring which encloses part of the gamma chain. CF(1) is attached to CF(0) by a central stalk formed by the gamma and epsilon chains, while a peripheral stalk is formed by the delta and b chains.

It is found in the cell inner membrane. The catalysed reaction is ATP + H2O + 4 H(+)(in) = ADP + phosphate + 5 H(+)(out). In terms of biological role, produces ATP from ADP in the presence of a proton gradient across the membrane. The alpha chain is a regulatory subunit. In Burkholderia pseudomallei (strain 668), this protein is ATP synthase subunit alpha 2.